Consider the following 158-residue polypeptide: MEVSNSCSSFSSSSVDSTKPSPSESSVNLSLSLTFPSTSPQREARQDWPPIKSRLRDTLKGRRLLRRGDDTSLFVKVYMEGVPIGRKLDLCVFSGYESLLENLSHMFDTSIICGNRDRKHHVLTYEDKDGDWMMVGDIPWDMFLETVRRLKITRPERY.

A compositionally biased stretch (low complexity) spans methionine 1–proline 40. The segment at methionine 1–proline 49 is disordered. The EAR-like (transcriptional repression) motif lies at leucine 29–leucine 33. One can recognise a PB1 domain in the interval serine 72 to arginine 157.

The protein belongs to the Aux/IAA family. As to quaternary structure, homodimers and heterodimers.

It is found in the nucleus. Aux/IAA proteins are short-lived transcriptional factors that function as repressors of early auxin response genes at low auxin concentrations. Repression is thought to result from the interaction with auxin response factors (ARFs), proteins that bind to the auxin-responsive promoter element (AuxRE). Formation of heterodimers with ARF proteins may alter their ability to modulate early auxin response genes expression. This is Auxin-responsive protein IAA31 (IAA31) from Arabidopsis thaliana (Mouse-ear cress).